The primary structure comprises 226 residues: Putative ABC transporter ATP-binding protein DR_2469 (226 aa).

Positions 2-225 (IELRHVSHHY…LRVYRERMTW (224 aa)) constitute an ABC transporter domain. Residue 33-40 (GSNGSGKS) coordinates ATP.

Belongs to the ABC transporter superfamily.

It localises to the cell membrane. Its function is as follows. Probably part of an ABC transporter complex. Responsible for energy coupling to the transport system. The polypeptide is Putative ABC transporter ATP-binding protein DR_2469 (Deinococcus radiodurans (strain ATCC 13939 / DSM 20539 / JCM 16871 / CCUG 27074 / LMG 4051 / NBRC 15346 / NCIMB 9279 / VKM B-1422 / R1)).